Here is an 840-residue protein sequence, read N- to C-terminus: Probable alpha-glucuronidase A (840 aa).

An N-terminal signal peptide occupies residues 1-19; it reads MWSGIPVFALLSSIGIAAA. N-linked (GlcNAc...) asparagine glycans are attached at residues N50, N149, N222, N262, N279, N310, N465, N527, N576, N610, N682, N723, and N732.

This sequence belongs to the glycosyl hydrolase 67 family.

The protein resides in the secreted. It carries out the reaction an alpha-D-glucuronoside + H2O = D-glucuronate + an alcohol. Alpha-glucuronidase involved in the hydrolysis of xylan, a major structural heterogeneous polysaccharide found in plant biomass representing the second most abundant polysaccharide in the biosphere, after cellulose. Releases 4-O-methylglucuronic acid from xylan. In Neosartorya fischeri (strain ATCC 1020 / DSM 3700 / CBS 544.65 / FGSC A1164 / JCM 1740 / NRRL 181 / WB 181) (Aspergillus fischerianus), this protein is Probable alpha-glucuronidase A (aguA).